A 220-amino-acid polypeptide reads, in one-letter code: Large ribosomal subunit protein uL16 (220 aa).

The protein belongs to the universal ribosomal protein uL16 family. In terms of assembly, component of the small ribosomal subunit. Mature ribosomes consist of a small (40S) and a large (60S) subunit. The 40S subunit contains about 33 different proteins and 1 molecule of RNA (18S). The 60S subunit contains about 49 different proteins and 3 molecules of RNA (25S, 5.8S and 5S).

The polypeptide is Large ribosomal subunit protein uL16 (RPL10) (Vitis riparia (Frost grape)).